A 765-amino-acid polypeptide reads, in one-letter code: 5-methyltetrahydropteroyltriglutamate--homocysteine methyltransferase (765 aa).

5-methyltetrahydropteroyltri-L-glutamate contacts are provided by residues 18-21 and lysine 114; that span reads REWK. L-homocysteine contacts are provided by residues 437–439 and glutamate 490; that span reads IGS. L-methionine-binding positions include 437–439 and glutamate 490; that span reads IGS. A 5-methyltetrahydropteroyltri-L-glutamate-binding site is contributed by tryptophan 567. Aspartate 605 provides a ligand contact to L-homocysteine. Aspartate 605 lines the L-methionine pocket. Glutamate 611 serves as a coordination point for 5-methyltetrahydropteroyltri-L-glutamate. Positions 647, 649, and 671 each coordinate Zn(2+). The active-site Proton donor is histidine 700. Cysteine 732 serves as a coordination point for Zn(2+).

Belongs to the vitamin-B12 independent methionine synthase family. It depends on Zn(2+) as a cofactor.

It carries out the reaction 5-methyltetrahydropteroyltri-L-glutamate + L-homocysteine = tetrahydropteroyltri-L-glutamate + L-methionine. The protein operates within amino-acid biosynthesis; L-methionine biosynthesis via de novo pathway; L-methionine from L-homocysteine (MetE route): step 1/1. Functionally, catalyzes the transfer of a methyl group from 5-methyltetrahydrofolate to homocysteine resulting in methionine formation. This Listeria welshimeri serovar 6b (strain ATCC 35897 / DSM 20650 / CCUG 15529 / CIP 8149 / NCTC 11857 / SLCC 5334 / V8) protein is 5-methyltetrahydropteroyltriglutamate--homocysteine methyltransferase.